Reading from the N-terminus, the 782-residue chain is HHIP-like protein 1 (782 aa).

The signal sequence occupies residues 1–19 (MARARAGALLALWVLGAAA). 4 disulfides stabilise this stretch: Cys-181-Cys-521, Cys-185-Cys-528, Cys-399-Cys-417, and Cys-484-Cys-584. A glycan (N-linked (GlcNAc...) asparagine) is linked at Asn-234. Residues 604 to 666 (EKFIPKTRST…RRGRLNSASR (63 aa)) form a disordered region. Over residues 610 to 623 (TRSTPRPTARAPTR) the composition is skewed to low complexity. Positions 632-642 (AAPPAPTPRPA) are enriched in pro residues. One can recognise an SRCR domain in the interval 673 to 776 (VRLVRPAGLS…HDEDAGVVCS (104 aa)). 3 cysteine pairs are disulfide-bonded: Cys-700–Cys-765, Cys-713–Cys-775, and Cys-745–Cys-755.

This sequence belongs to the HHIP family.

The protein localises to the secreted. This is HHIP-like protein 1 (HHIPL1) from Homo sapiens (Human).